The following is an 895-amino-acid chain: Histone-lysine N-methyltransferase EZ3 (895 aa).

Positions 1 to 13 are enriched in low complexity; the sequence is MASSSKASDSSSQ. Disordered stretches follow at residues 1–30 and 396–446; these read MASS…APAS and SSVS…PGKR. Residues 396–422 show a composition bias toward polar residues; sequence SSVSAEESTTPPSADTSETENASSDMP. The segment covering 427 to 436 has biased composition (basic residues); the sequence is RKYKISKRGP. The 51-residue stretch at 528-578 folds into the SANT domain; sequence TLSCWSALERDLYLKGIEIFGKNSCLIARNLLSGMKTCMEVANYMYNNGAA. Residues 628–732 enclose the CXC domain; that stretch reads AGHPTVRKRI…SLGEPPARGD (105 aa). The SET domain occupies 747–862; sequence QRILLGRSDV…ASEELFYDYR (116 aa). Residues 870–895 are disordered; sequence AWARRPEGSKKDEASVSHHRAHKVAR. Residues 873 to 885 are compositionally biased toward basic and acidic residues; sequence RRPEGSKKDEASV. A compositionally biased stretch (basic residues) spans 886-895; that stretch reads SHHRAHKVAR.

Belongs to the class V-like SAM-binding methyltransferase superfamily. Histone-lysine methyltransferase family. EZ subfamily. In terms of tissue distribution, widely expressed.

It is found in the nucleus. It carries out the reaction L-lysyl(27)-[histone H3] + 3 S-adenosyl-L-methionine = N(6),N(6),N(6)-trimethyl-L-lysyl(27)-[histone H3] + 3 S-adenosyl-L-homocysteine + 3 H(+). In terms of biological role, polycomb group (PcG) protein. Catalytic subunit of some PcG multiprotein complex, which methylates 'Lys-27' of histone H3, leading to transcriptional repression of the affected target genes. PcG proteins are not required to initiate repression, but to maintain it during later stages of development. In Zea mays (Maize), this protein is Histone-lysine N-methyltransferase EZ3 (EZ3).